Here is an 885-residue protein sequence, read N- to C-terminus: Initiator protein NS1 (885 aa).

The tract at residues 404 to 477 (AEAGPSGTQP…GREDIFSGAP (74 aa)) is disordered. Polar residues predominate over residues 409–423 (SGTQPVETAQQSPPT). Residues 452–465 (QAAGGSEMGAGGSA) show a composition bias toward gly residues.

The protein belongs to the parvoviruses initiator protein NS1 family. As to quaternary structure, homooligomer. Mg(2+) is required as a cofactor.

It is found in the host nucleus. It catalyses the reaction ATP + H2O = ADP + phosphate + H(+). Its function is as follows. Multifunctional protein which displays endonuclease and helicase activities required for initiating and directing viral DNA replication. Also plays a role in viral packaging and transactivation of several promoters. Binds site-specifically to 2-3 approximate tandem copies within the origins of replication (Ori), unwinds this hairpin region and nicks one DNA strand thereby initiating the rolling circle replication (RCR). The sequence is that of Initiator protein NS1 from Bombyx mori densovirus (BmDNV).